A 328-amino-acid chain; its full sequence is MKLARTVSVAVTGGTGQIAYSFLFALAHGDVFGSDCGIDLRVYDLPGLERVLSGIRMELDDCAYPLLQSLRVTTSLEDAFDGIDAAFLIGAAPRGPGMERSDLLKRNGEIFSLQGSVLNTSAKRDAKIFVVGNPVNTNCWIAMSRAPKLNRRNFHSMLRLDQNRMQAMLAHRAQVPLDEVTNVVIWGNHSAKQVPDFTQSLISGKPAVEVISDRDWLENIMLPSIQNRGSAVIEARGKSSAGSAARALAEAARSIFVPKEGEWFSTGVCSDYNPYGIPEDLIFGFPCRMLPSGDYEIIPGLSWDVFIKNKIQISLDEISQEKANVSLL.

NAD(+) is bound at residue 13–19 (GGTGQIA). Residues arginine 94 and arginine 100 each contribute to the substrate site. NAD(+) is bound by residues asparagine 107, glutamine 114, and 131 to 133 (VGN). Asparagine 133 and arginine 164 together coordinate substrate. Histidine 189 acts as the Proton acceptor in catalysis.

It belongs to the LDH/MDH superfamily. MDH type 2 family.

It carries out the reaction (S)-malate + NAD(+) = oxaloacetate + NADH + H(+). Catalyzes the reversible oxidation of malate to oxaloacetate. The sequence is that of Malate dehydrogenase from Chlamydia felis (strain Fe/C-56) (Chlamydophila felis).